Reading from the N-terminus, the 88-residue chain is Small ribosomal subunit protein bS16c (88 aa).

Component of the chloroplast small ribosomal subunit (SSU). Mature 70S chloroplast ribosomes of higher plants consist of a small (30S) and a large (50S) subunit. The 30S small subunit contains 1 molecule of ribosomal RNA (16S rRNA) and 24 different proteins. The 50S large subunit contains 3 rRNA molecules (23S, 5S and 4.5S rRNA) and 33 different proteins.

Its subcellular location is the plastid. The protein localises to the chloroplast. Component of the chloroplast ribosome (chloro-ribosome), a dedicated translation machinery responsible for the synthesis of chloroplast genome-encoded proteins, including proteins of the transcription and translation machinery and components of the photosynthetic apparatus. This Spinacia oleracea (Spinach) protein is Small ribosomal subunit protein bS16c.